A 228-amino-acid polypeptide reads, in one-letter code: R-spondin-4 (228 aa).

The N-terminal stretch at 1–19 is a signal peptide; sequence MRAPLCLLLLLAHAVDMLA. Asn34 carries N-linked (GlcNAc...) asparagine glycosylation. Disulfide bonds link Cys35–Cys41, Cys38–Cys47, Cys50–Cys69, Cys73–Cys88, Cys91–Cys98, Cys95–Cys104, Cys107–Cys118, Cys122–Cys135, Cys139–Cys181, Cys150–Cys157, and Cys190–Cys196. The FU repeat unit spans residues 85-128; it reads ANRCKKCGATCESCFSQDFCIRCKRRFHLYKGKCLPSCPPGTLT. A TSP type-1 domain is found at 138–197; the sequence is ECEPSPWGSWSPCIHNGKTCGSGWGLETRVREAGPAKQEETASCRVLSESRKCPIKRLCP. The disordered stretch occupies residues 193–228; it reads KRLCPGERNPRQKNRKDRRQRKDRKLERRPHQRGSQ. Positions 203–228 are enriched in basic residues; sequence RQKNRKDRRQRKDRKLERRPHQRGSQ.

It belongs to the R-spondin family. In terms of assembly, binds heparin. Interacts with LGR4, LGR5 and LGR6.

The protein localises to the secreted. Its function is as follows. Activator of the canonical Wnt signaling pathway by acting as a ligand for LGR4-6 receptors. Upon binding to LGR4-6 (LGR4, LGR5 or LGR6), LGR4-6 associate with phosphorylated LRP6 and frizzled receptors that are activated by extracellular Wnt receptors, triggering the canonical Wnt signaling pathway to increase expression of target genes. Also regulates the canonical Wnt/beta-catenin-dependent pathway and non-canonical Wnt signaling by acting as an inhibitor of ZNRF3, an important regulator of the Wnt signaling pathway. This is R-spondin-4 (Rspo4) from Mus musculus (Mouse).